Reading from the N-terminus, the 130-residue chain is Endoglucanase 2 (130 aa).

Active-site residues include H47, D98, and E107.

Belongs to the glycosyl hydrolase 9 (cellulase E) family.

It carries out the reaction Endohydrolysis of (1-&gt;4)-beta-D-glucosidic linkages in cellulose, lichenin and cereal beta-D-glucans.. Involved in ripening fruit process. The chain is Endoglucanase 2 (CEL2) from Persea americana (Avocado).